The following is a 294-amino-acid chain: Large ribosomal subunit protein uL2c (294 aa).

Positions 224–249 (VMNPVDHPHGGGGEGKSPIGRSRPVT) are disordered.

It belongs to the universal ribosomal protein uL2 family. Part of the 50S ribosomal subunit.

The protein localises to the plastid. The protein resides in the chloroplast. The protein is Large ribosomal subunit protein uL2c (rpl2) of Porphyra purpurea (Red seaweed).